The primary structure comprises 494 residues: Ectonucleoside triphosphate diphosphohydrolase 8 (494 aa).

The Cytoplasmic portion of the chain corresponds to 1–8 (MRLSWKER). A helical transmembrane segment spans residues 9 to 29 (VFMVLLGVAAASGLTMLILIL). Topologically, residues 30-465 (VKATNVLLPA…LTQWRAQSYS (436 aa)) are extracellular. An intrachain disulfide couples C78 to C102. The Proton acceptor role is filled by E168. Residues C245 and C291 are joined by a disulfide bond. 2 N-linked (GlcNAc...) asparagine glycosylation sites follow: N299 and N303. C328 and C334 are oxidised to a cystine. A glycan (N-linked (GlcNAc...) asparagine) is linked at N362. A disulfide bond links C380 and C402. A helical membrane pass occupies residues 466-486 (IWIAGVVFAVLTLVAILGAAA). The Cytoplasmic portion of the chain corresponds to 487–494 (VQLFWTQD).

It belongs to the GDA1/CD39 NTPase family. It depends on Ca(2+) as a cofactor. Mg(2+) serves as cofactor. In terms of processing, N-glycosylated. In terms of tissue distribution, present in liver, and at lower level in jejunum and kidney. Limited to the canalicular domain of hepatocytes (at protein level).

It is found in the cell membrane. The catalysed reaction is a ribonucleoside 5'-triphosphate + 2 H2O = a ribonucleoside 5'-phosphate + 2 phosphate + 2 H(+). Canalicular ectonucleoside NTPDase responsible for the main hepatic NTPDase activity. Ectonucleoside NTPDases catalyze the hydrolysis of gamma- and beta-phosphate residues of nucleotides, playing a central role in concentration of extracellular nucleotides. Has activity toward ATP, ADP, UTP and UDP, but not toward AMP. The sequence is that of Ectonucleoside triphosphate diphosphohydrolase 8 (Entpd8) from Rattus norvegicus (Rat).